Here is a 98-residue protein sequence, read N- to C-terminus: Large ribosomal subunit protein uL23 (98 aa).

The protein belongs to the universal ribosomal protein uL23 family. Part of the 50S ribosomal subunit. Contacts protein L29, and trigger factor when it is bound to the ribosome.

Its function is as follows. One of the early assembly proteins it binds 23S rRNA. One of the proteins that surrounds the polypeptide exit tunnel on the outside of the ribosome. Forms the main docking site for trigger factor binding to the ribosome. This Lactobacillus johnsonii (strain CNCM I-12250 / La1 / NCC 533) protein is Large ribosomal subunit protein uL23.